Consider the following 383-residue polypeptide: Lipoyl synthase, mitochondrial (383 aa).

A mitochondrion-targeting transit peptide spans 1-19; sequence MHASTLTRCMRVAQNARCL. Residues 69 to 97 form a disordered region; that stretch reads DAAPGTKPSRKPNASNRKPKWLKAQPTQG. Residues Cys116, Cys121, Cys127, Cys147, Cys151, Cys154, and Ser362 each coordinate [4Fe-4S] cluster. The 220-residue stretch at 132 to 351 folds into the Radical SAM core domain; it reads KDGIATATIM…QKVAEQMGFL (220 aa).

It belongs to the radical SAM superfamily. Lipoyl synthase family. [4Fe-4S] cluster serves as cofactor.

Its subcellular location is the mitochondrion. The catalysed reaction is [[Fe-S] cluster scaffold protein carrying a second [4Fe-4S](2+) cluster] + N(6)-octanoyl-L-lysyl-[protein] + 2 oxidized [2Fe-2S]-[ferredoxin] + 2 S-adenosyl-L-methionine + 4 H(+) = [[Fe-S] cluster scaffold protein] + N(6)-[(R)-dihydrolipoyl]-L-lysyl-[protein] + 4 Fe(3+) + 2 hydrogen sulfide + 2 5'-deoxyadenosine + 2 L-methionine + 2 reduced [2Fe-2S]-[ferredoxin]. It functions in the pathway protein modification; protein lipoylation via endogenous pathway; protein N(6)-(lipoyl)lysine from octanoyl-[acyl-carrier-protein]: step 2/2. Its function is as follows. Catalyzes the radical-mediated insertion of two sulfur atoms into the C-6 and C-8 positions of the octanoyl moiety bound to the lipoyl domains of lipoate-dependent enzymes, thereby converting the octanoylated domains into lipoylated derivatives. This is Lipoyl synthase, mitochondrial from Phytophthora infestans (strain T30-4) (Potato late blight agent).